A 121-amino-acid chain; its full sequence is MARIAGVDIPRDKRVVISLTYVFGIGRTTAEKILTEAGISSETRVRDLTEDELGRIRDVIDRIKVEGDLRREVSLNIKRLMEIGSYRGLRHRRGLPVRGQNSKNNARTRKGPRRTVANKKK.

The disordered stretch occupies residues 91 to 121 (HRRGLPVRGQNSKNNARTRKGPRRTVANKKK). Residues 106-121 (ARTRKGPRRTVANKKK) show a composition bias toward basic residues.

The protein belongs to the universal ribosomal protein uS13 family. In terms of assembly, part of the 30S ribosomal subunit. Forms a loose heterodimer with protein S19. Forms two bridges to the 50S subunit in the 70S ribosome.

Its function is as follows. Located at the top of the head of the 30S subunit, it contacts several helices of the 16S rRNA. In the 70S ribosome it contacts the 23S rRNA (bridge B1a) and protein L5 of the 50S subunit (bridge B1b), connecting the 2 subunits; these bridges are implicated in subunit movement. Contacts the tRNAs in the A and P-sites. The sequence is that of Small ribosomal subunit protein uS13 from Bacillus cereus (strain G9842).